The following is a 295-amino-acid chain: Hepatic leukemia factor (295 aa).

Basic and acidic residues predominate over residues 36–52; that stretch reads PEDAFSKEKDKGKKLDD. Disordered regions lie at residues 36–76 and 92–149; these read PEDA…TLPY and LSEN…SPIR. The bZIP domain maps to 225 to 288; that stretch reads DDKYWARRRK…GKCKNILAKY (64 aa). The interval 227–247 is basic motif; the sequence is KYWARRRKNNMAAKRSRDARR. The segment at 248–255 is leucine-zipper; the sequence is LKENQIAI.

This sequence belongs to the bZIP family. PAR subfamily. In terms of assembly, binds DNA specifically as homodimer or heterodimer with other PAR factors.

It is found in the nucleus. This chain is Hepatic leukemia factor (Hlf), found in Mus musculus (Mouse).